A 208-amino-acid chain; its full sequence is Probable thymidylate kinase (208 aa).

Gly9 to Ser16 contacts ATP.

Belongs to the thymidylate kinase family.

The catalysed reaction is dTMP + ATP = dTDP + ADP. This is Probable thymidylate kinase from Thermococcus gammatolerans (strain DSM 15229 / JCM 11827 / EJ3).